The primary structure comprises 235 residues: DnaA regulatory inactivator Hda (235 aa).

This sequence belongs to the DnaA family. HdA subfamily. As to quaternary structure, the active form seems to be an ADP-bound monomer. Forms the RIDA complex (regulatory inactivation of DnaA) of ATP-DnaA, ADP-Hda and the DNA-loaded beta sliding clamp (dnaN).

Its function is as follows. Mediates the interaction of DNA replication initiator protein DnaA with DNA polymerase subunit beta sliding clamp (dnaN). Stimulates hydrolysis of ATP-DnaA to ADP-DnaA, rendering DnaA inactive for reinitiation, a process called regulatory inhibition of DnaA or RIDA. The protein is DnaA regulatory inactivator Hda of Yersinia pestis bv. Antiqua (strain Antiqua).